Consider the following 481-residue polypeptide: MRFLLQSITLVAAARAASIDLESLFGPYVSPETEIAEVGDADFDEVVSPRWSEWRPPTWTGAIKPQTEEDLQEIVRIAVANNVSFMATSGGHGTSLIYGTVKGLDINLANFNNVDIDLESNTVTVGAGAKLGDITEPLYKAGKAIQTARGNSPCVGVIGATIGGGIGYETGLFGLGVDALVSVRIITATGELITANETCNSDLLWAIRGAGANFGIITAATFKMFDQPNNGDAVIGTFVYNSSKSLGVFEYLSVLDNVLPPELGVQLSIGYDRTINETLLTVDIKHFAPWATFVDHWEHAEALGPISRNVSNVTLVELYAGLDGPCQTGAYVSGGTVGLGRTDAATMQEVFDDMTAFYEQYPGYLGQSLFQRYANNNTLKTPAHTAVYPWRDTKMFWLHENIFLNPELEAPTNELLVSLREKLHATSGFPADQPHIYVNYAFGDEGPEAWWSKENLPKLSYLKRKWDPKGVFGKGTPIPRF.

The signal sequence occupies residues methionine 1–alanine 16. The region spanning serine 52 to glutamine 227 is the FAD-binding PCMH-type domain. The N-linked (GlcNAc...) asparagine glycan is linked to asparagine 82. Histidine 92 carries the post-translational modification Pros-8alpha-FAD histidine. N-linked (GlcNAc...) asparagine glycosylation is found at asparagine 196, asparagine 241, asparagine 276, asparagine 309, asparagine 312, and asparagine 376.

Belongs to the oxygen-dependent FAD-linked oxidoreductase family. The cofactor is FAD.

In terms of biological role, FAD-linked oxidoreductase; part of the gene cluster that mediates the biosynthesis of asperfuranone, a probable antitumor agent. The polyketide synthase afoG is responsible for producing the 3,5-dimethyloctadienone moiety from acetyl-CoA, three malonyl-CoA, and two S-adenosyl methionines (SAM). The 3,5-dimethyloctadienone moiety is then loaded onto the SAT domain of afoE and extended with four malonyl-CoA and one SAM, which leads to the formation of 2,4-dihydroxy-6-(5,7-dimethyl-2-oxo-trans-3-trans-5-nonadienyl)-3-methylbenzaldehyde (compound 2) after reductive release and aldol condensation. AfoD is the next enzyme in the biosynthesis sequence and hydroxylates the side chain at the benzylic position of compound 2. After benzylic hydroxylation, a furan ring is formed after five-member ring hemiacetal formation and water elimination. AfoF and afoC are proposed to oxidize the R-diketone proton and to reduce the unconjugated carbonyl group, respectively, to generate asperfuranone. Since no intermediates could be isolated from afoF and afoC deletants, the sequence of these two enzymes is not fully understood. Moreover, since afoC deletant still produces a small amount of asperfuranone, other endogenous oxidoreductases might catalyze the same reaction with much less efficiency. The protein is FAD-linked oxidoreductase afoF of Emericella nidulans (strain FGSC A4 / ATCC 38163 / CBS 112.46 / NRRL 194 / M139) (Aspergillus nidulans).